Reading from the N-terminus, the 211-residue chain is Mitotic spindle assembly checkpoint protein MAD2B (211 aa).

The HORMA domain maps to 13 to 203 (QVVADILCEF…SDILKMQLYV (191 aa)).

In terms of assembly, homooligomer. Interacts with rev1. Interacts with rev3l. Interacts with fzr1 (in complex with the anaphase promoting complex APC). May interact with cdc20.

The protein resides in the nucleus. It is found in the cytoplasm. Its subcellular location is the cytoskeleton. It localises to the spindle. Its function is as follows. Adapter protein able to interact with different proteins and involved in different biological processes. Mediates the interaction between the error-prone DNA polymerase zeta catalytic subunit rev3l and the inserter polymerase rev1, thereby mediating the second polymerase switching in translesion DNA synthesis. Translesion DNA synthesis releases the replication blockade of replicative polymerases, stalled in presence of DNA lesions. May also play a role in signal transduction in response to DNA damage. May regulate the activation of the anaphase promoting complex APC thereby regulating progression through the cell cycle. Through transcriptional regulation may play a role in epithelial-mesenchymal transdifferentiation. Functionally, inhibits the fzr1-APC complex activity during mitosis. Plays a role in progression of mitosis. The protein is Mitotic spindle assembly checkpoint protein MAD2B (mad2l2) of Xenopus laevis (African clawed frog).